A 334-amino-acid chain; its full sequence is Eukaryotic translation initiation factor 3 subunit H (334 aa).

The MPN domain occupies 20-152; sequence VQCDGLAAMK…LKAYRLTPQA (133 aa).

The protein belongs to the eIF-3 subunit H family. In terms of assembly, component of the eukaryotic translation initiation factor 3 (eIF-3) complex.

The protein localises to the cytoplasm. Its function is as follows. Component of the eukaryotic translation initiation factor 3 (eIF-3) complex, which is involved in protein synthesis of a specialized repertoire of mRNAs and, together with other initiation factors, stimulates binding of mRNA and methionyl-tRNAi to the 40S ribosome. The eIF-3 complex specifically targets and initiates translation of a subset of mRNAs involved in cell proliferation. This Anopheles gambiae (African malaria mosquito) protein is Eukaryotic translation initiation factor 3 subunit H.